Here is a 371-residue protein sequence, read N- to C-terminus: Protein RecA (371 aa).

Position 75–82 (75–82) interacts with ATP; the sequence is GPESSGKT. Positions 343–371 are disordered; that stretch reads KAKDEPIADEDQPIDVVPNFDDQDVEPQN.

The protein belongs to the RecA family.

The protein localises to the cytoplasm. Can catalyze the hydrolysis of ATP in the presence of single-stranded DNA, the ATP-dependent uptake of single-stranded DNA by duplex DNA, and the ATP-dependent hybridization of homologous single-stranded DNAs. It interacts with LexA causing its activation and leading to its autocatalytic cleavage. In Corynebacterium urealyticum (strain ATCC 43042 / DSM 7109), this protein is Protein RecA.